The chain runs to 575 residues: MNSSQACFFHFSLRPISLSHPSYAFLSKRDPFLCSQPRKCLTTNLNMSRTRQGHSIQMNRRHLLMKERKSFSINYSDKFRDDSMSSEEMHTDALDVEIIPPDSQDIRNSQNSAVSNTLQDDRPKSFRNRFLDFVRISSVLNTAAERFFKSEIRRRLFVTAVLLVLSRVGYFIPLPGFDRRLIPQDYLSFVSGSVEELGEFGAEIKLSLFQLGLSPQIIASIIMQVLCHVLPSLVKLRKEGLDGHEKIKSYIWWLSFFFAIVEALVVAYTSLQYSVFAATAQVKHVMMTSSLLVCGAMTMTWLCDTISESGFGHGSSLIICVGILTGYTETLHKMLNQISGSFSNWLPYLLGLLGIFTVVTMFAVVVTEGCRKIKLQYYGFKLASASREGSPITEVEPYIPFNINPAGMQPVLTTTYLLAFPSILASILGSPFLLNMKEILNPESTVGAPPWVYYSIYAFFVFLFNIFDIANLPKEIADYLNKMGARIPNIKPGKATIEYLTKIQASTRFWGGLLLSFLATASTVLDHYLRSINQGFSIGFTSVLIIVGSIIELRRSYHAYNVMPSLSKALKRYGV.

The transit peptide at 1 to 34 (MNSSQACFFHFSLRPISLSHPSYAFLSKRDPFLC) directs the protein to the chloroplast. 10 consecutive transmembrane segments (helical) span residues 157 to 177 (FVTA…LPGF), 206 to 226 (LSLF…MQVL), 251 to 271 (IWWL…YTSL), 285 to 305 (VMMT…LCDT), 306 to 326 (ISES…ILTG), 346 to 366 (LPYL…AVVV), 414 to 434 (TTYL…PFLL), 447 to 467 (GAPP…FNIF), 509 to 529 (FWGG…DHYL), and 531 to 551 (SINQ…GSII).

Belongs to the SecY/SEC61-alpha family. In terms of assembly, part of a second Sec protein translocation apparatus. Interacts probably with SECA2. As to expression, ubiquitous.

The protein resides in the plastid. The protein localises to the chloroplast membrane. Its subcellular location is the amyloplast membrane. It localises to the chloroplast thylakoid membrane. Involved in protein export. Probably interacts with other proteins to allow the postimport or conservative sorting pathway for inner membrane proteins in plastids. Central subunit of the protein translocation channel SecYE. Consists of two halves formed by TMs 1-5 and 6-10. These two domains form a lateral gate at the front which open onto the bilayer between TMs 2 and 7, and are clamped together by SecE at the back. The channel is closed by both a pore ring composed of hydrophobic SecY resides and a short helix (helix 2A) on the extracellular side of the membrane which forms a plug. The sequence is that of Preprotein translocase subunit SCY2, chloroplastic (SCY2) from Arabidopsis thaliana (Mouse-ear cress).